The chain runs to 918 residues: Translation initiation factor IF-2 (918 aa).

The tract at residues 39–321 is disordered; it reads DDASEKHLRN…KRDGRMKETT (283 aa). A compositionally biased stretch (low complexity) spans 95–146; it reads KSSNNESTTRNNNNNKNGNQNRNNTNGRPNNNQNRPNNNRNQNNNRNGNRPN. A compositionally biased stretch (basic and acidic residues) spans 148-158; the sequence is PKRDEKQDRIR. Positions 159-174 are enriched in low complexity; the sequence is ASVAEAARMAAQANRE. Residues 180–190 are compositionally biased toward polar residues; that stretch reads PQANRQRTNSA. Low complexity-rich tracts occupy residues 201–231, 237–267, and 278–296; these read NNQN…NNRN, SRPN…TANN, and GRNN…QNRP. Basic residues predominate over residues 302 to 313; the sequence is RKNKKRNRKAKR. Residues 419–588 enclose the tr-type G domain; sequence SRPPVVTIMG…LLQAEVLELK (170 aa). Residues 428–435 are G1; the sequence is GHVDHGKT. GTP is bound at residue 428-435; the sequence is GHVDHGKT. Residues 453–457 are G2; the sequence is GITQG. A G3 region spans residues 474-477; sequence DTPG. Residues 474 to 478 and 528 to 531 each bind GTP; these read DTPGH and NKID. The interval 528–531 is G4; the sequence is NKID. A G5 region spans residues 564 to 566; sequence SAK.

Belongs to the TRAFAC class translation factor GTPase superfamily. Classic translation factor GTPase family. IF-2 subfamily.

The protein localises to the cytoplasm. In terms of biological role, one of the essential components for the initiation of protein synthesis. Protects formylmethionyl-tRNA from spontaneous hydrolysis and promotes its binding to the 30S ribosomal subunits. Also involved in the hydrolysis of GTP during the formation of the 70S ribosomal complex. The chain is Translation initiation factor IF-2 from Pediococcus pentosaceus (strain ATCC 25745 / CCUG 21536 / LMG 10740 / 183-1w).